A 397-amino-acid chain; its full sequence is Na(+)/H(+) antiporter NhaA 2 (397 aa).

A run of 11 helical transmembrane segments spans residues 9 to 29 (LHNPAASGILIFLAAVAAMAV), 59 to 79 (LLLWINDGLMAVFFLLVGLEL), 95 to 115 (ILPVVGAVGGIALPAAIYTLI), 125 to 145 (GWAIPTATDIAFALGILALLG), 154 to 174 (LFLLTLAIIDDLAAILIIAFF), 177 to 197 (SELSPASLMIAGSAIGTLILM), 222 to 242 (SGVHATLAGVVLGFVIPLKGE), 260 to 280 (VVGLGILPLFAFANAGVSLQG), 292 to 312 (LGIALGLFLGKQIGVFGFVWL), 332 to 352 (GVALLCGVGFTMSLFISSLAF), and 371 to 391 (LGILTGSILSGIFGYILLRFS).

This sequence belongs to the NhaA Na(+)/H(+) (TC 2.A.33) antiporter family.

The protein localises to the cell inner membrane. It catalyses the reaction Na(+)(in) + 2 H(+)(out) = Na(+)(out) + 2 H(+)(in). Its function is as follows. Na(+)/H(+) antiporter that extrudes sodium in exchange for external protons. The polypeptide is Na(+)/H(+) antiporter NhaA 2 (Magnetococcus marinus (strain ATCC BAA-1437 / JCM 17883 / MC-1)).